Here is a 218-residue protein sequence, read N- to C-terminus: Heart- and neural crest derivatives-expressed protein 1 (218 aa).

3 disordered regions span residues 1-23 (MNLV…HPAH), 56-112 (APDF…RTES), and 172-203 (ADGG…RIKG). Residues 8-21 (AHHHHHHHHHHPHP) are compositionally biased toward basic residues. The segment covering 68–92 (AAAAAASYGPDARPGQSPGRLEALG) has biased composition (low complexity). The span at 95–107 (LGRRKGSGPKKER) shows a compositional bias: basic residues. Residues 97–149 (RRKGSGPKKERRRTESINSAFAELRECIPNVPADTKLSKIKTLRLATSYIAYL) form the bHLH domain. A Phosphothreonine; by PLK4 modification is found at Thr-110. Residue Ser-112 is modified to Phosphoserine; by PLK4.

Efficient DNA binding requires dimerization with another bHLH protein. Forms homodimers and heterodimers with TCF3 gene products E12 and E47, HAND2 and HEY1, HEY2 and HEYL (hairy-related transcription factors). Interacts with MDFIC. Interacts with SOX15; the interaction enhances HAND1-induced differentiation of trophoblast giant cells. Post-translationally, phosphorylation by PLK4 disrupts the interaction with MDFIC and leads to translocation into the nucleoplasm, allowing dimerization and transcription factor activity.

It is found in the nucleus. Its subcellular location is the nucleoplasm. It localises to the nucleolus. Functionally, transcription factor that plays an essential role in both trophoblast giant cell differentiation and in cardiac morphogenesis. Binds the DNA sequence 5'-NRTCTG-3' (non-canonical E-box). Acts as a transcriptional repressor of SOX15. In the adult, could be required for ongoing expression of cardiac-specific genes. This is Heart- and neural crest derivatives-expressed protein 1 (HAND1) from Bos taurus (Bovine).